A 410-amino-acid polypeptide reads, in one-letter code: Platelet-activating factor acetylhydrolase IB subunit alpha (410 aa).

Positions 1–38 (MVLSQRQRDELNRAIADYLRSNGYEEAYSVFKKEAELD) are required for self-association and interaction with PAFAH1B2 and PAFAH1B3. Residues 1–66 (MVLSQRQRDE…SVIRLQKKVM (66 aa)) form an interaction with NDE1 region. The interval 1 to 102 (MVLSQRQRDE…EWIPRPPEKY (102 aa)) is interaction with NDEL1. The LisH domain maps to 7 to 39 (QRDELNRAIADYLRSNGYEEAYSVFKKEAELDM). K53 is subject to N6-acetyllysine. Residues 56-82 (TSVIRLQKKVMELESKLNEAKEEFTSG) adopt a coiled-coil conformation. Residues 83-410 (GPLGQKRDPK…DQTVKVWECR (328 aa)) are interaction with dynein and dynactin. WD repeat units lie at residues 106 to 147 (GHRS…RTLK), 148 to 187 (GHTDSVQDISFDHSGKLLTSCSADMTIKLWDFQGFECIRT), 190 to 229 (GHDHNVSSVAIMPNGDHLVSASRDKTIKMWEVQTGYCVKT), 232 to 271 (GHREWVRMVRPNQDGTLIASCSNDQTVRVWVVATKECKAE), 274 to 333 (EHEH…CLMT), 336 to 377 (GHDN…KTLN), and 378 to 410 (AHEHFVTSLDFHKTAPYVVTGSVDQTVKVWECR). At S109 the chain carries Phosphoserine. An interaction with DCX region spans residues 367 to 409 (YKNKRCMKTLNAHEHFVTSLDFHKTAPYVVTGSVDQTVKVWEC). An interaction with NDEL1 region spans residues 388 to 410 (FHKTAPYVVTGSVDQTVKVWECR).

It belongs to the WD repeat LIS1/nudF family. As to quaternary structure, can self-associate. Component of the cytosolic PAF-AH (I) heterotetrameric enzyme, which is composed of PAFAH1B1 (beta), PAFAH1B2 (alpha2) and PAFAH1B3 (alpha1) subunits. The catalytic activity of the enzyme resides in the alpha1 (PAFAH1B3) and alpha2 (PAFAH1B2) subunits, whereas the beta subunit (PAFAH1B1) has regulatory activity. Trimer formation is not essential for the catalytic activity. Interacts with the catalytic dimer of PAF-AH (I) heterotetrameric enzyme: interacts with PAFAH1B2 homodimer (alpha2/alpha2 homodimer), PAFAH1B3 homodimer (alpha1/alpha1 homodimer) and PAFAH1B2-PAFAH1B3 heterodimer (alpha2/alpha1 heterodimer). Interacts with DCX, dynein, dynactin, IQGAP1, KATNB1, NDE1, NDEL1, NUDC and RSN. Interacts with DISC1, and this interaction is enhanced by NDEL1. Interacts with DAB1 when DAB1 is phosphorylated in response to RELN/reelin signaling. Interacts with INTS13. Interacts with DCDC1.

It localises to the cytoplasm. It is found in the cytoskeleton. Its subcellular location is the microtubule organizing center. The protein localises to the centrosome. The protein resides in the spindle. It localises to the nucleus membrane. Regulatory subunit (beta subunit) of the cytosolic type I platelet-activating factor (PAF) acetylhydrolase (PAF-AH (I)), an enzyme that catalyzes the hydrolyze of the acetyl group at the sn-2 position of PAF and its analogs and participates in PAF inactivation. Regulates the PAF-AH (I) activity in a catalytic dimer composition-dependent manner. Positively regulates the activity of the minus-end directed microtubule motor protein dynein. May enhance dynein-mediated microtubule sliding by targeting dynein to the microtubule plus end. Required for several dynein- and microtubule-dependent processes such as the maintenance of Golgi integrity, the peripheral transport of microtubule fragments and the coupling of the nucleus and centrosome. Required during brain development for the proliferation of neuronal precursors and the migration of newly formed neurons from the ventricular/subventricular zone toward the cortical plate. Neuronal migration involves a process called nucleokinesis, whereby migrating cells extend an anterior process into which the nucleus subsequently translocates. During nucleokinesis dynein at the nuclear surface may translocate the nucleus towards the centrosome by exerting force on centrosomal microtubules. Also required for proper activation of Rho GTPases and actin polymerization at the leading edge of locomoting cerebellar neurons and postmigratory hippocampal neurons in response to calcium influx triggered via NMDA receptors. May also play a role in other forms of cell locomotion including the migration of fibroblasts during wound healing. Required for dynein recruitment to microtubule plus ends and BICD2-bound cargos. May modulate the Reelin pathway through interaction of the PAF-AH (I) catalytic dimer with VLDLR. The polypeptide is Platelet-activating factor acetylhydrolase IB subunit alpha (Macaca fascicularis (Crab-eating macaque)).